The chain runs to 288 residues: Anthranilate synthase beta subunit 1, chloroplastic (288 aa).

The N-terminal 58 residues, 1-58, are a transit peptide targeting the chloroplast; sequence MACSHLAAAAAAASPAAARSPAASSAATASAFARLSATPRVASGGLAVRGQRGVAAVV. Residues 83-282 form the Glutamine amidotransferase type-1 domain; the sequence is PIIVIDNYDS…VRFIEELEKQ (200 aa). 134–136 lines the L-glutamine pocket; sequence GPG. Catalysis depends on cysteine 161, which acts as the Nucleophile. L-glutamine is bound by residues glutamine 165 and 215 to 216; that span reads SL. Active-site residues include histidine 256 and glutamate 258.

Heterotetramer consisting of two non-identical subunits: a beta subunit and a large alpha subunit. Expressed in roots and leaves.

The protein resides in the plastid. It is found in the chloroplast. It carries out the reaction chorismate + L-glutamine = anthranilate + pyruvate + L-glutamate + H(+). It functions in the pathway amino-acid biosynthesis; L-tryptophan biosynthesis; L-tryptophan from chorismate: step 1/5. Its function is as follows. Part of a heterotetrameric complex that catalyzes the two-step biosynthesis of anthranilate, an intermediate in the biosynthesis of L-tryptophan. In the first step, the glutamine-binding beta subunit of anthranilate synthase (AS) provides the glutamine amidotransferase activity which generates ammonia as a substrate that, along with chorismate, is used in the second step, catalyzed by the large alpha subunit of AS to produce anthranilate. This is Anthranilate synthase beta subunit 1, chloroplastic from Oryza sativa subsp. japonica (Rice).